The chain runs to 291 residues: Malectin (291 aa).

Positions M1–G30 are cleaved as a signal peptide. Topologically, residues P31 to S268 are lumenal. Y81, Y103, Y130, F131, and D200 together coordinate a carbohydrate. The segment at L220–A264 is disordered. A compositionally biased stretch (acidic residues) spans E230–E240. A compositionally biased stretch (polar residues) spans L244–A264. N267 carries an N-linked (GlcNAc...) asparagine glycan. A helical transmembrane segment spans residues S269–C289. The Cytoplasmic segment spans residues R290–L291.

This sequence belongs to the malectin family. In terms of assembly, interacts with the oligosaccharyltransferase (OST) complex.

It localises to the endoplasmic reticulum membrane. Carbohydrate-binding protein with a strong ligand preference for Glc2-N-glycan. May play a role in the early steps of protein N-glycosylation. This Mus musculus (Mouse) protein is Malectin.